The following is a 366-amino-acid chain: Aldo-keto reductase AFTS1 (366 aa).

Asp75 is a binding site for NADP(+). Tyr80 functions as the Proton donor in the catalytic mechanism. His172 is a substrate binding site. Residues 202–203, Gln228, 257–267, and 329–337 contribute to the NADP(+) site; these read SS, GSLASGRLARP, and SSVERIDEA.

It belongs to the aldo/keto reductase family.

The protein operates within mycotoxin biosynthesis. Aldo-keto reductase; part of the gene clusters that mediate the biosynthesis of the host-selective toxins (HSTs) AF-toxins responsible for Alternaria black spot of strawberry disease by the strawberry pathotype. AF-toxin I and III are valine derivatives of 2,3-dyhydroxy-isovaleric acid and 2-hydroxy-isovaleric acid respectively, while AF II is an isoleucine derivative of 2-hydroxy-valeric acid. These derivatives are bound to a 9,10-epoxy-8-hydroxy-9-methyl-decatrienoic acid (EDA) moiety. On cellular level, AF-toxins affect plasma membrane of susceptible cells and cause a sudden increase in loss of K(+) after a few minutes of toxin treatment. The aldo-keto reductase AFTS1 catalyzes the conversion of 2-keto-isovaleric acid (2-KIV) to 2-hydroxy-isovaleric acid (2-HIV) by reduction of its ketone to an alcohol. The acyl-CoA ligase AFT1, the hydrolase AFT2 and the enoyl-CoA hydratases AFT3 and AFT6, but also the polyketide synthase AFT9, the acyl-CoA dehydrogenase AFT10, the cytochrome P450 monooxygenase AFT11 and the oxidoreductase AFT12 are all involved in the biosynthesis of the AK-, AF- and ACT-toxin common EDA structural moiety. The exact function of each enzyme, and of additional enzymes identified within the AF-toxin clusters have still to be determined. The protein is Aldo-keto reductase AFTS1 of Alternaria alternata (Alternaria rot fungus).